Consider the following 697-residue polypeptide: Polyribonucleotide nucleotidyltransferase (697 aa).

Positions 487 and 493 each coordinate Mg(2+). The KH domain occupies 554–613; sequence PRIETIQIKPSKIAVVIGPGGKQIRAIIEQTGVQIDIDDTGLVNIAAIDLVSIEKAKAII. The region spanning 623–691 is the S1 motif domain; that stretch reads GRIYSGKAIS…ERGQIKLSRK (69 aa).

The protein belongs to the polyribonucleotide nucleotidyltransferase family. Requires Mg(2+) as cofactor.

The protein resides in the cytoplasm. It carries out the reaction RNA(n+1) + phosphate = RNA(n) + a ribonucleoside 5'-diphosphate. Its function is as follows. Involved in mRNA degradation. Catalyzes the phosphorolysis of single-stranded polyribonucleotides processively in the 3'- to 5'-direction. The sequence is that of Polyribonucleotide nucleotidyltransferase from Protochlamydia amoebophila (strain UWE25).